The sequence spans 141 residues: HTH-type transcriptional repressor NsrR (141 aa).

The region spanning glutamine 2 to glutamate 129 is the HTH rrf2-type domain. Positions isoleucine 28–arginine 51 form a DNA-binding region, H-T-H motif. Residues cysteine 91, cysteine 96, and cysteine 102 each coordinate [2Fe-2S] cluster.

Requires [2Fe-2S] cluster as cofactor.

Functionally, nitric oxide-sensitive repressor of genes involved in protecting the cell against nitrosative stress. May require iron for activity. The chain is HTH-type transcriptional repressor NsrR from Enterobacter sp. (strain 638).